A 463-amino-acid chain; its full sequence is L-seryl-tRNA(Sec) selenium transferase (463 aa).

K295 is modified (N6-(pyridoxal phosphate)lysine).

It belongs to the SelA family. In terms of assembly, homodecamer; pentamer of dimers. Binds only one seryl-tRNA(Sec) per dimer. Pyridoxal 5'-phosphate serves as cofactor.

The protein resides in the cytoplasm. It carries out the reaction L-seryl-tRNA(Sec) + selenophosphate + H(+) = L-selenocysteinyl-tRNA(Sec) + phosphate. It functions in the pathway aminoacyl-tRNA biosynthesis; selenocysteinyl-tRNA(Sec) biosynthesis; selenocysteinyl-tRNA(Sec) from L-seryl-tRNA(Sec) (bacterial route): step 1/1. Functionally, converts seryl-tRNA(Sec) to selenocysteinyl-tRNA(Sec) required for selenoprotein biosynthesis. This is L-seryl-tRNA(Sec) selenium transferase from Shigella flexneri serotype 5b (strain 8401).